We begin with the raw amino-acid sequence, 316 residues long: tRNA dimethylallyltransferase (316 aa).

An ATP-binding site is contributed by 17–24 (GPTASGKT). 19–24 (TASGKT) contacts substrate. Interaction with substrate tRNA stretches follow at residues 42-45 (DSAL), 166-170 (QRLSR), 247-252 (RCVGYR), and 280-287 (KRQITWLR).

It belongs to the IPP transferase family. As to quaternary structure, monomer. The cofactor is Mg(2+).

It carries out the reaction adenosine(37) in tRNA + dimethylallyl diphosphate = N(6)-dimethylallyladenosine(37) in tRNA + diphosphate. Catalyzes the transfer of a dimethylallyl group onto the adenine at position 37 in tRNAs that read codons beginning with uridine, leading to the formation of N6-(dimethylallyl)adenosine (i(6)A). The protein is tRNA dimethylallyltransferase of Escherichia coli O45:K1 (strain S88 / ExPEC).